A 34-amino-acid chain; its full sequence is U10-ctenitoxin-Pr1a (34 aa).

Cystine bridges form between Cys2–Cys15, Cys9–Cys20, Cys14–Cys31, and Cys22–Cys29.

Expressed by the venom gland.

The protein resides in the secreted. In terms of biological role, non-toxic to mice and insects. In Phoneutria reidyi (Brazilian Amazonian armed spider), this protein is U10-ctenitoxin-Pr1a.